We begin with the raw amino-acid sequence, 137 residues long: Large ribosomal subunit protein uL16c (137 aa).

Belongs to the universal ribosomal protein uL16 family. Part of the 50S ribosomal subunit.

The protein localises to the plastid. Its subcellular location is the chloroplast. This is Large ribosomal subunit protein uL16c from Thalassiosira pseudonana (Marine diatom).